Consider the following 91-residue polypeptide: CLAVATA3/ESR (CLE)-related protein 27 (91 aa).

A signal peptide spans 1–35; the sequence is MTHAREWRSSLTTTLLMVILLSYMLHLFCVYSRVG. 2 positions are modified to hydroxyproline: P83 and P86. The O-linked (Ara...) hydroxyproline glycan is linked to P86.

Belongs to the CLV3/ESR signal peptide family. The O-glycosylation (arabinosylation) of the hydroxyproline Pro-86 enhances binding affinity of the CLE27p peptide for its receptor. As to expression, mostly expressed in apex, and, to a lower extent, in roots, leaves, flowers and siliques.

The protein resides in the secreted. It localises to the extracellular space. Its function is as follows. Extracellular signal peptide that regulates cell fate. Represses root apical meristem maintenance. This Arabidopsis thaliana (Mouse-ear cress) protein is CLAVATA3/ESR (CLE)-related protein 27.